Consider the following 813-residue polypeptide: Ribonuclease R (813 aa).

Residues 260-587 (RVDLRDLPLV…LHRAIKYLLA (328 aa)) enclose the RNB domain. N6-acetyllysine is present on lysine 544. Positions 644 to 725 (GNVFKGVISS…DERKIDFSLI (82 aa)) constitute an S1 motif domain. The tract at residues 733–813 (NVGKTAREKA…KRAAKKKVAE (81 aa)) is disordered. 2 stretches are compositionally biased toward basic and acidic residues: residues 737–749 (TARE…DAGK) and 761–774 (VNFE…GEKK). Over residues 775–791 (TKPKAAKKDARKAKKPS) the composition is skewed to basic residues. Over residues 792 to 801 (AKTQKIAAAT) the composition is skewed to low complexity. Residues 802 to 813 (KAKRAAKKKVAE) are compositionally biased toward basic residues.

This sequence belongs to the RNR ribonuclease family. RNase R subfamily. As to quaternary structure, monomer.

It is found in the cytoplasm. The enzyme catalyses Exonucleolytic cleavage in the 3'- to 5'-direction to yield nucleoside 5'-phosphates.. In terms of biological role, 3'-5' exoribonuclease that releases 5'-nucleoside monophosphates and is involved in maturation of structured RNAs. Required for the expression of virulence genes on the large plasmid of S.flexneri at the post-transcriptional level. The polypeptide is Ribonuclease R (Shigella flexneri).